The following is a 238-amino-acid chain: MTALVVTGTGTGVGKTVVTAAIGALAHDRHHAVAVVKPAQTGVGPGELGDVDLVRDLTGITDVHELARYPDPLAPATAARRSGHRAVDLDELAARIGTLADSRDLVLVEGAGGLLVRYDAGGATLADLARVLRAPVLVVTAAGLGALNDTALTLEALAHRGLDLAGVVVGSWPAEPDLACRCNLIDLESLAARPLAGVLPAGAGLLARLEFLAVARASLQPALGGTFRAQEFRARYET.

12–17 (GVGKTV) provides a ligand contact to ATP. Residue T16 coordinates Mg(2+). Residue K37 is part of the active site. T41 is a binding site for substrate. Residues D50, 109–112 (EGAG), 170–171 (GS), and 200–202 (PAG) contribute to the ATP site. The Mg(2+) site is built by D50 and E109.

This sequence belongs to the dethiobiotin synthetase family. Homodimer. Requires Mg(2+) as cofactor.

The protein resides in the cytoplasm. The catalysed reaction is (7R,8S)-7,8-diammoniononanoate + CO2 + ATP = (4R,5S)-dethiobiotin + ADP + phosphate + 3 H(+). The protein operates within cofactor biosynthesis; biotin biosynthesis; biotin from 7,8-diaminononanoate: step 1/2. In terms of biological role, catalyzes a mechanistically unusual reaction, the ATP-dependent insertion of CO2 between the N7 and N8 nitrogen atoms of 7,8-diaminopelargonic acid (DAPA, also called 7,8-diammoniononanoate) to form a ureido ring. The polypeptide is ATP-dependent dethiobiotin synthetase BioD (Frankia casuarinae (strain DSM 45818 / CECT 9043 / HFP020203 / CcI3)).